The chain runs to 193 residues: Large ribosomal subunit protein bL25 (193 aa).

Belongs to the bacterial ribosomal protein bL25 family. CTC subfamily. In terms of assembly, part of the 50S ribosomal subunit; part of the 5S rRNA/L5/L18/L25 subcomplex. Contacts the 5S rRNA. Binds to the 5S rRNA independently of L5 and L18.

This is one of the proteins that binds to the 5S RNA in the ribosome where it forms part of the central protuberance. The polypeptide is Large ribosomal subunit protein bL25 (Lachnoclostridium phytofermentans (strain ATCC 700394 / DSM 18823 / ISDg) (Clostridium phytofermentans)).